An 84-amino-acid chain; its full sequence is Acyl-CoA-binding protein (84 aa).

The 84-residue stretch at 1-84 (MTTFEEAAQK…LYEQLATKYA (84 aa)) folds into the ACB domain. An acyl-CoA-binding positions include Lys-12, 27–31 (YGLYK), Lys-53, and Tyr-72.

The protein belongs to the ACBP family. As to quaternary structure, interacts with dhkA.

Functionally, binds to acyl-CoA. Processed into the SDF-2 (spore differentiation factor 2) a peptide which triggers sporulation. SDF-2 appears to stimulate prestalk cells to release additional SDF-2 by acting through a signal transduction pathway that also involves dhkA, regA and PKA. Induces encapsulation of prespore cells in a dhkA-dependent manner. GABA induces the release of acbA from prespore cells and induces the exposure of tagC on the surface of prestalk cells where it can convert acbA to SDF-2. Glutamate acts as a competitive inhibitor and is also able to inhibit induction of sporulation by SDF-2. In Dictyostelium discoideum (Social amoeba), this protein is Acyl-CoA-binding protein (acbA).